We begin with the raw amino-acid sequence, 328 residues long: scyllo-inositol 2-dehydrogenase (NADP(+)) IolU (328 aa).

Belongs to the Gfo/Idh/MocA family.

The catalysed reaction is scyllo-inositol + NADP(+) = scyllo-inosose + NADPH + H(+). Functionally, catalyzes the NADPH-dependent reduction of scyllo-inosose (SIS) to scyllo-inositol (SI) in vitro, but is unable to dehydrogenate scyllo-inositol and myo-inositol. Is less efficient than the functional paralog IolW. Under physiological conditions, may primarily function as an NADPH-dependent oxidoreductase that reduces carbonyl group(s) in its substrates. Cannot use NADH instead of NADPH. The protein is scyllo-inositol 2-dehydrogenase (NADP(+)) IolU of Bacillus subtilis (strain 168).